The following is a 311-amino-acid chain: MQELRFVLIVVGALAIMALLFHGLWTSKKEGKAKFGDKPLSKLDLGESEPKESEMYVAPEDDYEIIRKERKEPAFEDEKPFSTSGVIGDPLIDDLHSGQDKENKFSQPKFDDDITVAEAEAAASIEQDAPAWVEQPQEIDEPLTHHPDEIDAFSGEETIVELDEPMSQTVEPELQVIVLNVHCAGDSPFVGTKLFDSMQQNGLVYGEMDIFHRHLDMSGTGKVLFSVANMMHPGTLKHDDPAEFSTKGISFFMTLPCYGEADQNFNLMLKTAQKIADDLGGNVLDDKRNLMTPDRLAGYRRQIVEFKAANA.

The Periplasmic segment spans residues 1–5; sequence MQELR. A helical membrane pass occupies residues 6–26; it reads FVLIVVGALAIMALLFHGLWT. Residues 27–311 lie on the Cytoplasmic side of the membrane; sequence SKKEGKAKFG…QIVEFKAANA (285 aa). Residues 32-54 show a composition bias toward basic and acidic residues; sequence KAKFGDKPLSKLDLGESEPKESE. Residues 32–60 are disordered; it reads KAKFGDKPLSKLDLGESEPKESEMYVAPE.

Belongs to the ZipA family. In terms of assembly, interacts with FtsZ via their C-terminal domains.

Its subcellular location is the cell inner membrane. Essential cell division protein that stabilizes the FtsZ protofilaments by cross-linking them and that serves as a cytoplasmic membrane anchor for the Z ring. Also required for the recruitment to the septal ring of downstream cell division proteins. In Vibrio vulnificus (strain CMCP6), this protein is Cell division protein ZipA.